A 318-amino-acid polypeptide reads, in one-letter code: D-alanine--D-alanine ligase (318 aa).

The ATP-grasp domain maps to 116 to 315 (KQVWQSLGLP…FEQLSLAVLA (200 aa)). Residue 146–201 (MSRLGDLVMVKPAQEGSSIGMAKVSNAQQLAAAIQQAFEYDDKVLLEQFIQGSEYT) coordinates ATP. Mg(2+) is bound by residues D269, E282, and N284.

Belongs to the D-alanine--D-alanine ligase family. Requires Mg(2+) as cofactor. It depends on Mn(2+) as a cofactor.

The protein localises to the cytoplasm. It catalyses the reaction 2 D-alanine + ATP = D-alanyl-D-alanine + ADP + phosphate + H(+). It participates in cell wall biogenesis; peptidoglycan biosynthesis. In terms of biological role, cell wall formation. This chain is D-alanine--D-alanine ligase, found in Pseudoalteromonas atlantica (strain T6c / ATCC BAA-1087).